Here is a 121-residue protein sequence, read N- to C-terminus: Basic phospholipase A2 BmTX-I (121 aa).

7 disulfide bridges follow: C26–C114, C28–C45, C44–C95, C50–C121, C51–C88, C58–C82, and C76–C86. Residues Y27, G29, and G31 each contribute to the Ca(2+) site. The active site involves H48. D49 provides a ligand contact to Ca(2+). Residue D89 is part of the active site.

Ca(2+) serves as cofactor. As to expression, expressed by the venom gland.

Its subcellular location is the secreted. It catalyses the reaction a 1,2-diacyl-sn-glycero-3-phosphocholine + H2O = a 1-acyl-sn-glycero-3-phosphocholine + a fatty acid + H(+). Inhibited by magnesium, cadmium and manganese ions. Also inhibited by crotapotin. Snake venom phospholipase A2 (PLA2) that shows enzymatic activity in the presence of a synthetic substrate. In vitro, blocks the neuromuscular transmission in young chick biventer cervicis preparations. In mice, induces myonecrosis and a systemic interleukin-6 response upon intramuscular injection. Also induces edema and exerts a strong pro-inflammatory effect. PLA2 catalyzes the calcium-dependent hydrolysis of the 2-acyl groups in 3-sn-phosphoglycerides. This Bothrops moojeni (Lance-headed viper) protein is Basic phospholipase A2 BmTX-I.